A 185-amino-acid chain; its full sequence is Thymidine kinase (185 aa).

ATP is bound by residues 7 to 14 (GPMFAGKT) and 83 to 86 (DEIQ). The active-site Proton acceptor is the Glu-84. 4 residues coordinate Zn(2+): Cys-139, Cys-142, Cys-177, and His-180.

This sequence belongs to the thymidine kinase family. Homotetramer.

It is found in the cytoplasm. It catalyses the reaction thymidine + ATP = dTMP + ADP + H(+). This is Thymidine kinase from Pyrobaculum aerophilum (strain ATCC 51768 / DSM 7523 / JCM 9630 / CIP 104966 / NBRC 100827 / IM2).